We begin with the raw amino-acid sequence, 466 residues long: tRNA(Ile)-lysidine synthase (466 aa).

Residue 42–47 coordinates ATP; the sequence is SGGVDS.

Belongs to the tRNA(Ile)-lysidine synthase family.

It is found in the cytoplasm. It carries out the reaction cytidine(34) in tRNA(Ile2) + L-lysine + ATP = lysidine(34) in tRNA(Ile2) + AMP + diphosphate + H(+). Its function is as follows. Ligates lysine onto the cytidine present at position 34 of the AUA codon-specific tRNA(Ile) that contains the anticodon CAU, in an ATP-dependent manner. Cytidine is converted to lysidine, thus changing the amino acid specificity of the tRNA from methionine to isoleucine. This Anaplasma marginale (strain St. Maries) protein is tRNA(Ile)-lysidine synthase.